Consider the following 366-residue polypeptide: UDP-N-acetylenolpyruvoylglucosamine reductase (366 aa).

One can recognise an FAD-binding PCMH-type domain in the interval 29-203 (VGPVARTLVT…LEVEFALDAS (175 aa)). Residue Arg177 is part of the active site. Ser258 serves as the catalytic Proton donor. The active site involves Glu358.

Belongs to the MurB family. FAD serves as cofactor.

It localises to the cytoplasm. It carries out the reaction UDP-N-acetyl-alpha-D-muramate + NADP(+) = UDP-N-acetyl-3-O-(1-carboxyvinyl)-alpha-D-glucosamine + NADPH + H(+). It functions in the pathway cell wall biogenesis; peptidoglycan biosynthesis. Cell wall formation. The chain is UDP-N-acetylenolpyruvoylglucosamine reductase from Mycobacterium ulcerans (strain Agy99).